The sequence spans 288 residues: Rhox homeobox family member 2B (288 aa).

The tract at residues 16-136 (SPAVDDEKEL…GLEPGNAQQP (121 aa)) is disordered. Positions 39 to 48 (VKEEEEDAQP) are enriched in acidic residues. A compositionally biased stretch (basic and acidic residues) spans 68-80 (GEEKDGGGEEKDG). Positions 134-193 (QQPNVHAFTPLQLQELECIFQREQFPSEFLRRRLARSMNVTELAVQIWFENRRAKWRRHQ) form a DNA-binding region, homeobox. The short motif at 186-195 (RAKWRRHQRA) is the Nuclear localization signal element.

Belongs to the paired-like homeobox family. PEPP subfamily. As to expression, expressed in testis, mainly expressed in germ cells, but also detected in somatic cells such as Sertoli cells, Leydig cells and peritubular cells.

The protein resides in the nucleus. Functionally, transcription factor maybe involved in reproductive processes. Modulates expression of target genes encoding proteins involved in processes relevant to spermatogenesis. The protein is Rhox homeobox family member 2B of Homo sapiens (Human).